Reading from the N-terminus, the 411-residue chain is MNFDNLALTDKEIFNIIQLENNRQNNTIELIASENFASKSVMEAMGSQLTNKYAEGYPSKRYYGGCEEVDKIESLAIERLKKIFGCEHANVQPHSGSQANMAVYLSVLEPGDTIMGMNLSHGGHLTHGSPVNFSGRLFNFVAYGVNKETELINYDEVRSLALQHKPKMIVAGASAYSRVIDFKRLKQICDEVGAYFMVDMAHIAGLIAAGYHPSPVPYADFVTTTTHKTLRGPRGGAILCKEKYAKQVDKAIFPGIQGGPLMHVIAAKAVCFGEALKDDYKNYIEQVVKNAKVLEEELKKYDFKLVSGGTDNHLLLIDLTNKDITGKDAEKLLDSIGITVNKNTIPFETKSPFVTSGIRIGTPAVTTRGFKEEEMKEIAYLINYVIENRDSDLSEAKNKVKEICSRHILYK.

(6S)-5,6,7,8-tetrahydrofolate-binding positions include leucine 119 and 123 to 125 (GHL). Residue lysine 228 is modified to N6-(pyridoxal phosphate)lysine. 351–353 (SPF) contributes to the (6S)-5,6,7,8-tetrahydrofolate binding site.

It belongs to the SHMT family. In terms of assembly, homodimer. The cofactor is pyridoxal 5'-phosphate.

It localises to the cytoplasm. It catalyses the reaction (6R)-5,10-methylene-5,6,7,8-tetrahydrofolate + glycine + H2O = (6S)-5,6,7,8-tetrahydrofolate + L-serine. Its pathway is one-carbon metabolism; tetrahydrofolate interconversion. It participates in amino-acid biosynthesis; glycine biosynthesis; glycine from L-serine: step 1/1. Functionally, catalyzes the reversible interconversion of serine and glycine with tetrahydrofolate (THF) serving as the one-carbon carrier. This reaction serves as the major source of one-carbon groups required for the biosynthesis of purines, thymidylate, methionine, and other important biomolecules. Also exhibits THF-independent aldolase activity toward beta-hydroxyamino acids, producing glycine and aldehydes, via a retro-aldol mechanism. The protein is Serine hydroxymethyltransferase of Clostridium novyi (strain NT).